The following is a 397-amino-acid chain: Calponin-like protein clik-2 (397 aa).

6 Calponin-like repeats span residues 29–54, 73–98, 119–144, 161–189, 209–234, and 255–280; these read LSQQ…RWNI, LRVQ…RFQV, IPKQ…RNQV, LCFQ…RQAT, TPWY…RDVL, and VPLQ…RNTQ. Positions 301–397 are disordered; the sequence is EETKPPGSAS…EEEEEEEEDE (97 aa). Residues 321-332 show a composition bias toward basic and acidic residues; that stretch reads KFEERESSRQSE. Acidic residues-rich tracts occupy residues 344 to 360 and 367 to 397; these read VEPE…EEKI and EEEE…EEDE.

This sequence belongs to the calponin family. Expressed in pharyngeal muscle cells (at protein level).

In terms of biological role, required for pharyngeal pumping. The protein is Calponin-like protein clik-2 of Caenorhabditis elegans.